The following is an 827-amino-acid chain: Protein Jade-1 (827 aa).

Residues 1-35 (MKRVCLPSSSEDSDDNGSLSTSWSQHSRSLPSFRH) are disordered. Positions 16 to 30 (NGSLSTSWSQHSRSL) are enriched in polar residues. The PHD-type 1 zinc-finger motif lies at 200–250 (DVVCDVCQSPDGEDGNEMVFCDKCNICVHQACYGILKVPEGSWLCRTCALG). The segment at 252-286 (QPKCLLCPKKGGAMKPTRSGTKWVHVSCALWIPEV) adopts a C2HC pre-PHD-type zinc-finger fold. The PHD-type 2 zinc finger occupies 310–366 (LLCSLCNEKVGACIQCSIKNCRTAFHVTCAFDHGLEMKTILTQEDEVKFKSYCPKHG). Disordered regions lie at residues 622–705 (TVAK…SSSL) and 769–810 (RTKE…SSSS). Composition is skewed to basic and acidic residues over residues 646–661 (SRTQ…EKPL) and 669–682 (KHTE…EKKR). Positions 692–705 (ATASSNKKQCSSSL) are enriched in polar residues.

The protein belongs to the JADE family. Component of the HBO1 complex composed.

It localises to the nucleus. Its subcellular location is the chromosome. The protein localises to the cytoplasm. It is found in the cytoskeleton. The protein resides in the cilium basal body. Its function is as follows. Scaffold subunit of some HBO1 complexes, which have a histone H4 acetyltransferase activity. Plays a key role in HBO1 complex by directing KAT7/HBO1 specificity towards histone H4 acetylation (H4K5ac, H4K8ac and H4K12ac), regulating DNA replication initiation, regulating DNA replication initiation. The polypeptide is Protein Jade-1 (jade1) (Xenopus laevis (African clawed frog)).